A 66-amino-acid chain; its full sequence is MAFLKKSLFLVLFLGLVSLSICDEEKRQDEDDDDDDDEEKRGVIDIIKGAGKDLIAHAIGKLAEKV.

Residues 1–22 form the signal peptide; that stretch reads MAFLKKSLFLVLFLGLVSLSIC. The propeptide occupies 23–39; that stretch reads DEEKRQDEDDDDDDDEE. Val66 is modified (valine amide).

Expressed by the skin glands.

Its subcellular location is the secreted. Functionally, has antibacterial activity against Gram-negative bacterium E.coli ATCC 25922 (MIC=320 uM) but not against S.pneumoniae ATCC 700603, S.choleraesuis ATCC 14028 or Gram-positive bacterium S.aureus ATCC 29313. Shows no hemolytic activity and no cytotoxicity. The protein is Ocellatin-PT3 of Leptodactylus pustulatus (Ceara white-lipped frog).